A 199-amino-acid polypeptide reads, in one-letter code: FMN-dependent NADH:quinone oxidoreductase (199 aa).

FMN contacts are provided by residues S10, S16–S18, and M96–F99.

Belongs to the azoreductase type 1 family. Homodimer. The cofactor is FMN.

It carries out the reaction 2 a quinone + NADH + H(+) = 2 a 1,4-benzosemiquinone + NAD(+). The catalysed reaction is N,N-dimethyl-1,4-phenylenediamine + anthranilate + 2 NAD(+) = 2-(4-dimethylaminophenyl)diazenylbenzoate + 2 NADH + 2 H(+). Functionally, quinone reductase that provides resistance to thiol-specific stress caused by electrophilic quinones. Its function is as follows. Also exhibits azoreductase activity. Catalyzes the reductive cleavage of the azo bond in aromatic azo compounds to the corresponding amines. This is FMN-dependent NADH:quinone oxidoreductase from Azotobacter vinelandii (strain DJ / ATCC BAA-1303).